We begin with the raw amino-acid sequence, 343 residues long: S-adenosylmethionine:tRNA ribosyltransferase-isomerase (343 aa).

This sequence belongs to the QueA family. As to quaternary structure, monomer.

The protein resides in the cytoplasm. It catalyses the reaction 7-aminomethyl-7-carbaguanosine(34) in tRNA + S-adenosyl-L-methionine = epoxyqueuosine(34) in tRNA + adenine + L-methionine + 2 H(+). Its pathway is tRNA modification; tRNA-queuosine biosynthesis. In terms of biological role, transfers and isomerizes the ribose moiety from AdoMet to the 7-aminomethyl group of 7-deazaguanine (preQ1-tRNA) to give epoxyqueuosine (oQ-tRNA). In Syntrophotalea carbinolica (strain DSM 2380 / NBRC 103641 / GraBd1) (Pelobacter carbinolicus), this protein is S-adenosylmethionine:tRNA ribosyltransferase-isomerase.